The following is a 118-amino-acid chain: Lutropin subunit beta (118 aa).

6 cysteine pairs are disulfide-bonded: cysteine 9-cysteine 57, cysteine 23-cysteine 72, cysteine 26-cysteine 110, cysteine 34-cysteine 88, cysteine 38-cysteine 90, and cysteine 93-cysteine 100. N-linked (GlcNAc...) asparagine glycosylation occurs at asparagine 13.

Belongs to the glycoprotein hormones subunit beta family. Heterodimer of a common alpha chain and a unique beta chain which confers biological specificity to thyrotropin, lutropin, follitropin and gonadotropin.

The protein resides in the secreted. Its function is as follows. Promotes spermatogenesis and ovulation by stimulating the testes and ovaries to synthesize steroids. This is Lutropin subunit beta (LHB) from Balaenoptera acutorostrata (Common minke whale).